Here is a 118-residue protein sequence, read N- to C-terminus: UPF0102 protein NE0719 (118 aa).

This sequence belongs to the UPF0102 family.

The protein is UPF0102 protein NE0719 of Nitrosomonas europaea (strain ATCC 19718 / CIP 103999 / KCTC 2705 / NBRC 14298).